The sequence spans 383 residues: MDIAKKFISEIDDKLESKSEFDKELEKIKSSFNEEYEKWSSGKQRGSSSKHGNQSTHGDSSPTRNSSGSSKKGRPKANRVETSSELPDHLIRGFINEKLFLKNFLLKQKESEEFKTLAIVGKYGVGKTTLCQAVFNDEDVKQVYFPRIWVSMYSKETKEDEDPKIDVVKRILRSLGVEDEMFKHIKTEAEEEKSIKDEAGEREEETVKEKELARLLYALHLNLIGKKYLIVLDDVWEDNEWDQRLDDEKKQQEKSHLSCGFPKGFGGKVIMTSRDERLAKAIVGEEENLQRLFPRSDAESLWEIYIDAVPTKVDDAAATNLGDAVATNAGDAVAPKVNPRYPGRYKQELMDKSCGIPLAARMLAKIEPVKVDEIGNIDRKQSF.

A disordered region spans residues 36-84 (YEKWSSGKQRGSSSKHGNQSTHGDSSPTRNSSGSSKKGRPKANRVETSS). The span at 41-70 (SGKQRGSSSKHGNQSTHGDSSPTRNSSGSS) shows a compositional bias: polar residues. 2 NB-ARC domains span residues 75 to 184 (PKAN…MFKH) and 207 to 281 (VKEK…LAKA). Residue 121-128 (GKYGVGKT) participates in ATP binding.

In terms of biological role, possible disease resistance protein. This Arabidopsis thaliana (Mouse-ear cress) protein is Probable disease resistance protein At4g19060.